The primary structure comprises 317 residues: tRNA dimethylallyltransferase (317 aa).

An ATP-binding site is contributed by 21-28 (GPTASGKS). 23–28 (TASGKS) lines the substrate pocket. The segment at 46–49 (DSMQ) is interaction with substrate tRNA.

The protein belongs to the IPP transferase family. In terms of assembly, monomer. Requires Mg(2+) as cofactor.

It carries out the reaction adenosine(37) in tRNA + dimethylallyl diphosphate = N(6)-dimethylallyladenosine(37) in tRNA + diphosphate. In terms of biological role, catalyzes the transfer of a dimethylallyl group onto the adenine at position 37 in tRNAs that read codons beginning with uridine, leading to the formation of N6-(dimethylallyl)adenosine (i(6)A). The sequence is that of tRNA dimethylallyltransferase from Nitrobacter hamburgensis (strain DSM 10229 / NCIMB 13809 / X14).